Reading from the N-terminus, the 197-residue chain is Protein GrpE (197 aa).

Basic and acidic residues predominate over residues 1-27; the sequence is MSNKEQHIEKEEQLQEEKHEEQQKTEE. The interval 1-34 is disordered; sequence MSNKEQHIEKEEQLQEEKHEEQQKTEETEVEAVN.

It belongs to the GrpE family. As to quaternary structure, homodimer.

Its subcellular location is the cytoplasm. Its function is as follows. Participates actively in the response to hyperosmotic and heat shock by preventing the aggregation of stress-denatured proteins, in association with DnaK and GrpE. It is the nucleotide exchange factor for DnaK and may function as a thermosensor. Unfolded proteins bind initially to DnaJ; upon interaction with the DnaJ-bound protein, DnaK hydrolyzes its bound ATP, resulting in the formation of a stable complex. GrpE releases ADP from DnaK; ATP binding to DnaK triggers the release of the substrate protein, thus completing the reaction cycle. Several rounds of ATP-dependent interactions between DnaJ, DnaK and GrpE are required for fully efficient folding. This chain is Protein GrpE, found in Pasteurella multocida (strain Pm70).